The following is a 284-amino-acid chain: MEMO1 family protein MmarC5_0191 (284 aa).

Belongs to the MEMO1 family.

The protein is MEMO1 family protein MmarC5_0191 of Methanococcus maripaludis (strain C5 / ATCC BAA-1333).